A 167-amino-acid polypeptide reads, in one-letter code: MHCYNGMTGLHHREPGMVGAGLTDKRAWLELIADGHHVHPAAMSLCCCCAKERIVLITDAMQAAGMPDGRYTLCGEEVQMHGGVVRTASGGLAGSTLSVDAAVRNMVELTGVTPAEAIHMASLHPARMLGVDGVLGSLKPGKRASVVALDSGLHVQQIWIQGQLASF.

It belongs to the metallo-dependent hydrolases superfamily. NagA family.

The enzyme catalyses N-acetyl-D-galactosamine 6-phosphate + H2O = D-galactosamine 6-phosphate + acetate. The protein is Putative N-acetylgalactosamine-6-phosphate deacetylase (agaA) of Escherichia coli (strain K12).